The primary structure comprises 147 residues: NADPH-dependent 7-cyano-7-deazaguanine reductase (147 aa).

Residues Met1–Tyr23 are disordered. The active-site Thioimide intermediate is Cys46. Catalysis depends on Asp53, which acts as the Proton donor. Residues Val68 to Ser70 and His87 to Glu88 contribute to the substrate site.

It belongs to the GTP cyclohydrolase I family. QueF type 1 subfamily.

The protein resides in the cytoplasm. It carries out the reaction 7-aminomethyl-7-carbaguanine + 2 NADP(+) = 7-cyano-7-deazaguanine + 2 NADPH + 3 H(+). It participates in tRNA modification; tRNA-queuosine biosynthesis. In terms of biological role, catalyzes the NADPH-dependent reduction of 7-cyano-7-deazaguanine (preQ0) to 7-aminomethyl-7-deazaguanine (preQ1). The polypeptide is NADPH-dependent 7-cyano-7-deazaguanine reductase (Zymomonas mobilis subsp. mobilis (strain ATCC 31821 / ZM4 / CP4)).